We begin with the raw amino-acid sequence, 300 residues long: Mitochondrial tricarboxylate transporter 1 (300 aa).

Solcar repeat units lie at residues 8–98 (VSPS…FRSM), 107–197 (LSNS…LRDW), and 209–294 (INWL…VVWL). The next 6 membrane-spanning stretches (helical) occupy residues 11 to 31 (SVSV…TFPI), 67 to 87 (PKGL…KAGV), 114 to 134 (LAGM…SETI), 172 to 191 (GVVP…LGTY), 208 to 228 (LINW…AVYG), and 277 to 297 (LIVS…LLAG).

Belongs to the mitochondrial carrier (TC 2.A.29) family.

The protein resides in the mitochondrion membrane. Mitochondrial tricarboxylate transporter; part of the gene cluster that mediates the biosynthesis of itaconic acid and 2-hydroxyparaconate. Cis-aconitate is secreted by the mitochondrial tricarboxylate transporter MTT1. In the cytosol cis-aconitate is converted into trans-aconitate via isomerization by the aconitate-delta-isomerase ADI1. Decarboxylation of trans-aconitate by the trans-aconitate decarboxylase TAD1 then leads then to the production of itaconic acid. The cytochrome P450 monooxygenase CYP3 further converts itaconate to 2-hydroxyparaconate via oxidation of the double bond, leading to a transient epoxide, which can subsequently be lactonized to produce 2-hydroxyparaconate. Secretion of itaconate and possibly 2-hydroxyparaconate into the medium is mediated by the major facilitator ITP1. The glyoxalase domain-containing protein RDO1 is not involved in the biosynthesis of itaconate and 2-hydroxyparaconate, however, it might play a role in the further conversion of 2-hydroxyparaconate to itatartarate. The polypeptide is Mitochondrial tricarboxylate transporter 1 (Mycosarcoma maydis (Corn smut fungus)).